The chain runs to 320 residues: Cytochrome f (320 aa).

An N-terminal signal peptide occupies residues 1–35; it reads MQTRNAFSWLKKQITRSISVSLMIYILTRTSISSA. 4 residues coordinate heme: Y36, C56, C59, and H60. The chain crosses the membrane as a helical span at residues 286-305; sequence VQGLLFFLASVILAQIFLVL.

Belongs to the cytochrome f family. The 4 large subunits of the cytochrome b6-f complex are cytochrome b6, subunit IV (17 kDa polypeptide, petD), cytochrome f and the Rieske protein, while the 4 small subunits are PetG, PetL, PetM and PetN. The complex functions as a dimer. Requires heme as cofactor.

The protein resides in the plastid. Its subcellular location is the chloroplast thylakoid membrane. In terms of biological role, component of the cytochrome b6-f complex, which mediates electron transfer between photosystem II (PSII) and photosystem I (PSI), cyclic electron flow around PSI, and state transitions. The polypeptide is Cytochrome f (Atropa belladonna (Belladonna)).